Reading from the N-terminus, the 109-residue chain is uncharacterized protein (109 aa).

A run of 2 helical transmembrane segments spans residues 18-38 and 48-68; these read TTLAWTRTAFALLVNGVLLTL and AGLIPAGLAGAAASCCYVIAL.

Its subcellular location is the cell membrane. This is an uncharacterized protein from Mycobacterium tuberculosis (strain CDC 1551 / Oshkosh).